The primary structure comprises 60 residues: UPF0434 protein ESA_02427 (60 aa).

It belongs to the UPF0434 family.

In Cronobacter sakazakii (strain ATCC BAA-894) (Enterobacter sakazakii), this protein is UPF0434 protein ESA_02427.